We begin with the raw amino-acid sequence, 305 residues long: Protoheme IX farnesyltransferase (305 aa).

The next 9 helical transmembrane spans lie at 31 to 51, 52 to 72, 102 to 119, 123 to 145, 151 to 171, 179 to 199, 218 to 238, 240 to 260, and 281 to 301; these read VMSL…YSVH, PFIA…AGAI, ALSF…FMAL, LLAS…IWLK, NIVI…AAVS, IILF…LALF, ILYT…VSLM, FFIG…GLVF, and FAYS…TSTI.

Belongs to the UbiA prenyltransferase family. Protoheme IX farnesyltransferase subfamily.

Its subcellular location is the cell inner membrane. The catalysed reaction is heme b + (2E,6E)-farnesyl diphosphate + H2O = Fe(II)-heme o + diphosphate. Its pathway is porphyrin-containing compound metabolism; heme O biosynthesis; heme O from protoheme: step 1/1. Its function is as follows. Converts heme B (protoheme IX) to heme O by substitution of the vinyl group on carbon 2 of heme B porphyrin ring with a hydroxyethyl farnesyl side group. This Rickettsia akari (strain Hartford) protein is Protoheme IX farnesyltransferase.